The chain runs to 525 residues: Light-independent protochlorophyllide reductase subunit B (525 aa).

Position 36 (Asp-36) interacts with [4Fe-4S] cluster. Catalysis depends on Asp-286, which acts as the Proton donor. 421 to 422 (GL) serves as a coordination point for substrate.

This sequence belongs to the ChlB/BchB/BchZ family. As to quaternary structure, protochlorophyllide reductase is composed of three subunits; ChlL, ChlN and ChlB. Forms a heterotetramer of two ChlB and two ChlN subunits. Requires [4Fe-4S] cluster as cofactor.

It carries out the reaction chlorophyllide a + oxidized 2[4Fe-4S]-[ferredoxin] + 2 ADP + 2 phosphate = protochlorophyllide a + reduced 2[4Fe-4S]-[ferredoxin] + 2 ATP + 2 H2O. The protein operates within porphyrin-containing compound metabolism; chlorophyll biosynthesis (light-independent). Functionally, component of the dark-operative protochlorophyllide reductase (DPOR) that uses Mg-ATP and reduced ferredoxin to reduce ring D of protochlorophyllide (Pchlide) to form chlorophyllide a (Chlide). This reaction is light-independent. The NB-protein (ChlN-ChlB) is the catalytic component of the complex. The polypeptide is Light-independent protochlorophyllide reductase subunit B (Prochlorococcus marinus (strain NATL1A)).